The following is a 57-amino-acid chain: Catalase-1 (57 aa).

Tyr37 provides a ligand contact to heme.

In terms of assembly, homodimer. Requires heme as cofactor.

It carries out the reaction 2 H2O2 = O2 + 2 H2O. Its function is as follows. Decomposes hydrogen peroxide into water and oxygen; serves to protect cells from the toxic effects of hydrogen peroxide. This chain is Catalase-1, found in Comamonas terrigena.